Consider the following 65-residue polypeptide: MKNFKNFTLEDMKAKRLELKKEYLDLRFKSVVGHVENPLKKREIRRDIARLNTMICEYELGIRKV.

This sequence belongs to the universal ribosomal protein uL29 family.

The protein is Large ribosomal subunit protein uL29 (rpmC) of Borreliella burgdorferi (strain ATCC 35210 / DSM 4680 / CIP 102532 / B31) (Borrelia burgdorferi).